Consider the following 638-residue polypeptide: Neuroendocrine convertase 2 (638 aa).

The first 25 residues, 1–25, serve as a signal peptide directing secretion; sequence MKGGCVSQWKAAAGLLFCVTVFASA. Residues 26–109 constitute a propeptide that is removed on maturation; it reads ERPVFTNHFL…QQEGFDRKKR (84 aa). A Peptidase S8 domain is found at 129–453; sequence QWYLINTGQA…YGVLDAGAMV (325 aa). Residues aspartate 167 and histidine 208 each act as charge relay system in the active site. Disulfide bonds link cysteine 225–cysteine 376 and cysteine 317–cysteine 347. N-linked (GlcNAc...) asparagine glycosylation occurs at asparagine 375. Serine 384 (charge relay system) is an active-site residue. Residues 461 to 597 enclose the P/Homo B domain; sequence TVPERFHCVG…TLMLHGSQSA (137 aa). Cysteine 468 and cysteine 494 are disulfide-bonded. Asparagine 514 and asparagine 524 each carry an N-linked (GlcNAc...) asparagine glycan.

The protein belongs to the peptidase S8 family. Furin subfamily.

It localises to the cytoplasmic vesicle. The protein localises to the secretory vesicle. Its subcellular location is the secreted. The enzyme catalyses Release of protein hormones and neuropeptides from their precursors, generally by hydrolysis of -Lys-Arg-|- bonds.. Functionally, serine endopeptidase which is involved in the processing of hormone and other protein precursors at sites comprised of pairs of basic amino acid residues. Responsible for the release of glucagon from proglucagon in pancreatic A cells. The sequence is that of Neuroendocrine convertase 2 (PCSK2) from Sus scrofa (Pig).